A 216-amino-acid polypeptide reads, in one-letter code: V-type ATP synthase subunit D (216 aa).

It belongs to the V-ATPase D subunit family.

In terms of biological role, produces ATP from ADP in the presence of a proton gradient across the membrane. The sequence is that of V-type ATP synthase subunit D from Clostridium botulinum (strain ATCC 19397 / Type A).